The chain runs to 114 residues: MNKRELYDSFEELEKQTKFTLSQIERIKAEMGKVIEKNAELEIENQHLREHLHEIEQKQKGNKEGTELSKSRKNLEKLYEEGFHVCNVDNMYGSRRVNDEPCVFCQDVIYGDRH.

Zn(2+) contacts are provided by H84, C86, C102, and C105.

The protein belongs to the YabA family. As to quaternary structure, homotetramer. Interacts with both DnaA and DnaN, acting as a bridge between these two proteins. Zn(2+) serves as cofactor.

The protein localises to the cytoplasm. It localises to the nucleoid. Functionally, involved in control of chromosome replication initiation. Inhibits the cooperative binding of DnaA to the oriC region, thus negatively regulating initiation of chromosome replication. Inhibits the ability of DnaA-ATP to form a helix on DNA; does not disassemble preformed DnaA-DNA helices. Decreases the residence time of DnaA on the chromosome at its binding sites (oriC, replication forks and promoter-binding sites). Tethers DnaA to the replication machinery via the DNA polymerase beta sliding clamp subunit (dnaN). Associates with oriC and other DnaA targets on the chromosome in a DnaA-dependent manner. The sequence is that of Replication initiation control protein YabA from Ligilactobacillus salivarius (strain UCC118) (Lactobacillus salivarius).